Here is a 250-residue protein sequence, read N- to C-terminus: Probable phosphatase VPA1527 (250 aa).

His-8, His-10, His-16, His-41, Glu-74, His-102, His-132, Asp-194, and His-196 together coordinate Zn(2+).

The protein belongs to the PHP family. Zn(2+) is required as a cofactor.

This Vibrio parahaemolyticus serotype O3:K6 (strain RIMD 2210633) protein is Probable phosphatase VPA1527.